Reading from the N-terminus, the 220-residue chain is Ribosomal RNA small subunit methyltransferase G (220 aa).

S-adenosyl-L-methionine is bound by residues G82, L87, 137-138 (VE), and R152.

This sequence belongs to the methyltransferase superfamily. RNA methyltransferase RsmG family.

It localises to the cytoplasm. It catalyses the reaction guanosine(527) in 16S rRNA + S-adenosyl-L-methionine = N(7)-methylguanosine(527) in 16S rRNA + S-adenosyl-L-homocysteine. Specifically methylates the N7 position of guanine in position 527 of 16S rRNA. The polypeptide is Ribosomal RNA small subunit methyltransferase G (Janthinobacterium sp. (strain Marseille) (Minibacterium massiliensis)).